The following is a 295-amino-acid chain: Inward rectifier potassium channel Kirbac3.1 (295 aa).

The Cytoplasmic segment spans residues 1–47; it reads MTGGMKPPARKPRILNSDGSSNITRLGLEKRGWLDDHYHDLLTVSWP. A helical transmembrane segment spans residues 48 to 69; that stretch reads VFITLITGLYLVTNALFALAYL. The Extracellular portion of the chain corresponds to 70–82; the sequence is ACGDVIENARPGS. The helical; Pore-forming intramembrane region spans 83–95; sequence FTDAFFFSVQTMA. Positions 96–100 match the Selectivity filter motif; the sequence is TIGYG. The chain crosses the membrane as a helical span at residues 107-131; sequence PLANTLVTLEALCGMLGLAVAASLI. Topologically, residues 132–295 are cytoplasmic; it reads YARFTRPTAG…DLGKFHEIAQ (164 aa).

It belongs to the inward rectifier-type potassium channel (TC 1.A.2.1) family. KCNJ11 subfamily. Homotetramer.

The protein localises to the membrane. Functionally, inward rectifier potassium channel that mediates potassium uptake into the cell. Inward rectifier potassium channels are characterized by a greater tendency to allow potassium to flow into the cell rather than out of it. The inward rectification may be achieved by the blockage of outward current by cytoplasmic divalent metal ions and polyamines. Complements an E.coli mutant that is defective in K(+) uptake. In Paramagnetospirillum magnetotacticum (Aquaspirillum magnetotacticum), this protein is Inward rectifier potassium channel Kirbac3.1.